The chain runs to 333 residues: Arginase (333 aa).

An N-acetylmethionine modification is found at Met-1. The residue at position 16 (Ser-16) is a Phosphoserine. Thr-77 carries the post-translational modification Phosphothreonine. His-123, Asp-146, His-148, and Asp-150 together coordinate Mn(2+). Substrate contacts are provided by residues 148-152 (HADIN), 159-161 (SGN), and Asp-205. Residues Asp-256 and Asp-258 each coordinate Mn(2+). A Phosphothreonine modification is found at Thr-270. Substrate contacts are provided by Thr-270 and Glu-301.

It belongs to the arginase family. As to quaternary structure, homotrimer. Requires Mn(2+) as cofactor.

The catalysed reaction is L-arginine + H2O = urea + L-ornithine. It functions in the pathway nitrogen metabolism; urea cycle; L-ornithine and urea from L-arginine: step 1/1. In Saccharomyces cerevisiae (strain ATCC 204508 / S288c) (Baker's yeast), this protein is Arginase (CAR1).